Reading from the N-terminus, the 56-residue chain is uncharacterized protein (56 aa).

A helical transmembrane segment spans residues 6–26 (MLLIMLYMVLVVNDLILYNIL).

Its subcellular location is the membrane. This is an uncharacterized protein from Dictyostelium discoideum (Social amoeba).